Consider the following 394-residue polypeptide: NAD(P)H-quinone oxidoreductase subunit H (394 aa).

Belongs to the complex I 49 kDa subunit family. As to quaternary structure, NDH-1 can be composed of about 15 different subunits; different subcomplexes with different compositions have been identified which probably have different functions.

The protein localises to the cellular thylakoid membrane. The catalysed reaction is a plastoquinone + NADH + (n+1) H(+)(in) = a plastoquinol + NAD(+) + n H(+)(out). The enzyme catalyses a plastoquinone + NADPH + (n+1) H(+)(in) = a plastoquinol + NADP(+) + n H(+)(out). Its function is as follows. NDH-1 shuttles electrons from an unknown electron donor, via FMN and iron-sulfur (Fe-S) centers, to quinones in the respiratory and/or the photosynthetic chain. The immediate electron acceptor for the enzyme in this species is believed to be plastoquinone. Couples the redox reaction to proton translocation, and thus conserves the redox energy in a proton gradient. Cyanobacterial NDH-1 also plays a role in inorganic carbon-concentration. This Microcystis aeruginosa (strain NIES-843 / IAM M-2473) protein is NAD(P)H-quinone oxidoreductase subunit H.